The sequence spans 261 residues: MIVKTRAIVLREIRYRDQSKICSLFTREFGLLSVIIKGGRNPKSKLAGRFIAGTVLDIVLYKKTTREIQLVSEGNLLFSPMVPQPDIERYAIMYRIIDLVSQSIDGQEKNIPLFSLIASVLEELYSTSDRFRLLYSWFLLKLVSLLGFEPSIHRCVLSHEEISPATLAENKGELCFLFNPGGVALPASKSVIENENRPLSMATYALLSAISSTPLNLLKNIEAIPPQTDLLCNLLEEYCTLHLVHHPHKKNIAIVSQILSE.

This sequence belongs to the RecO family.

Functionally, involved in DNA repair and RecF pathway recombination. The chain is DNA repair protein RecO from Chlorobium phaeobacteroides (strain DSM 266 / SMG 266 / 2430).